Reading from the N-terminus, the 413-residue chain is Multidrug resistance protein MdtA (413 aa).

The first 32 residues, Met1–Ala32, serve as a signal peptide directing secretion. Over residues Ala32–His46 the composition is skewed to polar residues. The disordered stretch occupies residues Ala32–Arg59.

Belongs to the membrane fusion protein (MFP) (TC 8.A.1) family. Part of a tripartite efflux system composed of MdtA, MdtB and MdtC.

It is found in the cell inner membrane. In Pectobacterium carotovorum subsp. carotovorum (strain PC1), this protein is Multidrug resistance protein MdtA.